Here is a 283-residue protein sequence, read N- to C-terminus: Elongation factor Ts (283 aa).

The segment at Thr80–Val83 is involved in Mg(2+) ion dislocation from EF-Tu.

This sequence belongs to the EF-Ts family.

The protein localises to the cytoplasm. In terms of biological role, associates with the EF-Tu.GDP complex and induces the exchange of GDP to GTP. It remains bound to the aminoacyl-tRNA.EF-Tu.GTP complex up to the GTP hydrolysis stage on the ribosome. This chain is Elongation factor Ts, found in Haemophilus ducreyi (strain 35000HP / ATCC 700724).